Here is a 478-residue protein sequence, read N- to C-terminus: Cytochrome c-552 (478 aa).

The signal sequence occupies residues 1-26 (MARKTLRARRFFSLIFPFFFMTSVYA). Histidine 94 provides a ligand contact to heme c. Heme is bound by residues cysteine 122, cysteine 125, and lysine 126. The heme c site is built by cysteine 160, cysteine 163, histidine 164, cysteine 209, cysteine 212, and histidine 213. The Ca(2+) site is built by glutamate 215, tyrosine 216, lysine 261, and glutamine 263. Residue tyrosine 216 participates in substrate binding. A substrate-binding site is contributed by histidine 264. The heme c site is built by histidine 275, cysteine 282, cysteine 285, histidine 286, histidine 301, cysteine 314, cysteine 317, histidine 318, and histidine 393.

This sequence belongs to the cytochrome c-552 family. Ca(2+) is required as a cofactor. Heme c serves as cofactor.

Its subcellular location is the periplasm. It carries out the reaction 6 Fe(III)-[cytochrome c] + NH4(+) + 2 H2O = 6 Fe(II)-[cytochrome c] + nitrite + 8 H(+). Its pathway is nitrogen metabolism; nitrate reduction (assimilation). Catalyzes the reduction of nitrite to ammonia, consuming six electrons in the process. The protein is Cytochrome c-552 of Salmonella arizonae (strain ATCC BAA-731 / CDC346-86 / RSK2980).